The following is a 779-amino-acid chain: MDISEYDLTLDLDLQSKTFHGTETISASSGDFVLDAVGFNIEWIKVNGSDAKFEYDGNLLKINGLETAQKVEISYSGKISDSLSGIYFAGRESNGMVTTHFEATDARRMFPCIDHPAYKAVFSITLVIDKDYDAISNMPIKKVETSDRKIVEFEKTPRMSTYLLYIGVGKFKYASERYKDREIILASLKDIKSKYPIDIAKRSIEFYEGYFGIPYALPKMHLISVPEFGAGAMENWGAITFREIYLDIADNSAASTLRLSANVIAHEIAHQWFGDLVTMKWWNDLWLNESFATFMSYKTMDTIHPEWQFWGDFFVSRTSGALRSDSLKNTHPIEVDVKDPDEISQIFDEISYGKGASILRMIEDYVGAEDFRKGISKYLKEHAYGNAEGSDLWNAIETESGKPVNRIMEAWITKAGYPILKVSQDKTGIKVMQSRFFLGGGESTDRWPVPVKMRLNNGISQMLLEEESTVITDKDVIKLNADNLGFYRVNYDDETFSKIIENMDKLTPLDRVGLVDDLFAFLMAGVITPDTYKNRIKSFFNDKDANVISNIVNQFEYLRIITHYFDADAREFLGTAIRYLESADDENLKIAYGKASRLLALLDEAYCETLAPRFSNFEQQTPELKSAIATAYALSTGDVKGMVEKYRSLDRDEDKVKIISGFGKLKSSTDLSVVSGMIEKGEIKKQDMLSFYLSALETMAGREYIYSNLENIVKNVIRYFTGNRTASRTVEQILPVIGLTHPDAASIIERIGSKNTTMGLAKGKELLEVNRSLLERIGH.

Residues E102 and 231 to 235 (GAMEN) each bind substrate. H266 is a Zn(2+) binding site. The active-site Proton acceptor is the E267. Positions 270 and 289 each coordinate Zn(2+).

This sequence belongs to the peptidase M1 family. Part of the tricorn proteolytic complex. Requires Zn(2+) as cofactor.

Its subcellular location is the cytoplasm. Functionally, proteases F1, F2 and F3 degrade oligopeptides produced by Tricorn (themselves probably produced by the proteasome), yielding free amino acids. The sequence is that of Tricorn protease-interacting factor F3 (trf3) from Thermoplasma volcanium (strain ATCC 51530 / DSM 4299 / JCM 9571 / NBRC 15438 / GSS1).